The chain runs to 895 residues: AP-1 complex subunit gamma (895 aa).

5 HEAT repeats span residues 130 to 166 (TAMA…LRKV), 167 to 205 (PDLT…MDST), 211 to 256 (KKMV…ILGQ), 301 to 339 (NGLK…TDIQ), and 341 to 376 (VQRH…ESNI). Disordered regions lie at residues 591–687 (KQEE…MNNM), 706–733 (NNNS…NNKS), and 746–770 (QLTP…QTSV). Low complexity-rich tracts occupy residues 604-626 (PTQT…QSSQ), 639-658 (QSSA…GGNA), 675-687 (NGNM…MNNM), 706-731 (NNNS…NNNN), and 746-765 (QLTP…LSPT). The GAE domain maps to 775-893 (PQPLTFLVYQ…SDVPDTPLPS (119 aa)).

This sequence belongs to the adaptor complexes large subunit family. In terms of assembly, adaptor protein complex 1 (AP-1) is a heterotetramer composed of two large adaptins (gamma-type subunit and beta-type subunit), a medium adaptin (mu-type subunit) and a small adaptin (sigma-type subunit). Interacts with rhgA.

The protein localises to the golgi apparatus. It localises to the trans-Golgi network. It is found in the cytoplasmic vesicle. The protein resides in the clathrin-coated vesicle membrane. Subunit of clathrin-associated adaptor protein complex 1 that plays a role in protein sorting in the trans-Golgi network (TGN) and endosomes. The AP complexes mediate the recruitment of clathrin to membranes and the recognition of sorting signals within the cytosolic tails of transmembrane cargo molecules. Also involved in early steps of phagocytosis and macropinocytosis. The polypeptide is AP-1 complex subunit gamma (ap1g1) (Dictyostelium discoideum (Social amoeba)).